A 269-amino-acid chain; its full sequence is Mitochondrial scaffolding protein 1 (269 aa).

The PDZ domain occupies 49–121 (VVEIEKTSKG…HDEAVEVFRS (73 aa)). The interval 143 to 185 (RTQTPTASVSITPQVTPQTRSTQNNTDTPKSMSHSESKSRLTS) is disordered. Polar residues predominate over residues 145 to 174 (QTPTASVSITPQVTPQTRSTQNNTDTPKSM). A helical membrane pass occupies residues 240–262 (WLTEALYVSIGLGALTISGYLAY).

It localises to the membrane. Plays a role in the regulation of lifespan in a partially daf-16-mediated manner, and may be involved in regulating the levels of reactive oxygen species production in response to heat stress. This chain is Mitochondrial scaffolding protein 1, found in Caenorhabditis elegans.